The chain runs to 291 residues: 4-diphosphocytidyl-2-C-methyl-D-erythritol kinase (291 aa).

The active site involves lysine 10. ATP is bound at residue 99–109 (PMGGGLGGGSS). Residue aspartate 141 is part of the active site.

Belongs to the GHMP kinase family. IspE subfamily. Homodimer.

It carries out the reaction 4-CDP-2-C-methyl-D-erythritol + ATP = 4-CDP-2-C-methyl-D-erythritol 2-phosphate + ADP + H(+). It functions in the pathway isoprenoid biosynthesis; isopentenyl diphosphate biosynthesis via DXP pathway; isopentenyl diphosphate from 1-deoxy-D-xylulose 5-phosphate: step 3/6. Catalyzes the phosphorylation of the position 2 hydroxy group of 4-diphosphocytidyl-2C-methyl-D-erythritol. The chain is 4-diphosphocytidyl-2-C-methyl-D-erythritol kinase from Photorhabdus laumondii subsp. laumondii (strain DSM 15139 / CIP 105565 / TT01) (Photorhabdus luminescens subsp. laumondii).